The following is a 3255-amino-acid chain: Genome polyprotein (3255 aa).

The 146-residue stretch at 292-437 (VMNQQTLTAL…HTLTHRMVQY (146 aa)) folds into the Peptidase S30 domain. Residues His345, Asp354, and Ser388 each act as for P1 proteinase activity in the active site. The short motif at 489–492 (KITC) is the Involved in interaction with stylet and aphid transmission element. The Involved in virions binding and aphid transmission motif lies at 747–749 (PTK). In terms of domain architecture, Peptidase C6 spans 773–895 (MFVAKDGYCY…ESEMQHYRVG (123 aa)). Active-site for helper component proteinase activity residues include Cys781 and His854. A Helicase ATP-binding domain is found at 1397 to 1549 (EIAHNEYRDI…PMHMVDITTE (153 aa)). 1410 to 1417 (GGVGSGKS) contacts ATP. A DECH box motif is present at residues 1499 to 1502 (DECH). The Helicase C-terminal domain occupies 1568 to 1727 (DATKKGDNIL…GLPVMTSNVS (160 aa)). The Nuclear localization signal motif lies at 2062-2069 (EKGKKSGK). Tyr2084 is subject to O-(5'-phospho-RNA)-tyrosine. In terms of domain architecture, Peptidase C4 spans 2215–2433 (SKTLFRGLRD…MVWGGINLIN (219 aa)). Active-site for nuclear inclusion protein A activity residues include His2260, Asp2295, and Cys2365. A RdRp catalytic domain is found at 2699–2823 (WVYCDADGSQ…AIKPEYESLL (125 aa)). The disordered stretch occupies residues 2980–3027 (TKLDAGQGSKNDDKQKSSADSKDNVITEKGSGSGQVRKDDDINAGLHG). Positions 2989–3005 (KNDDKQKSSADSKDNVI) are enriched in basic and acidic residues.

It belongs to the potyviridae genome polyprotein family. Interacts with host eIF4E protein (via cap-binding region); this interaction mediates the translation of the VPg-viral RNA conjugates. Part of a complex that comprises VPg, RNA, host EIF4E and EIF4G; this interaction mediates the translation of the VPg-viral RNA conjugates. VPg is uridylylated by the polymerase and is covalently attached to the 5'-end of the genomic RNA. This uridylylated form acts as a nucleotide-peptide primer for the polymerase. Post-translationally, potyviral RNA is expressed as two polyproteins which undergo post-translational proteolytic processing. Genome polyprotein is processed by NIa-pro, P1 and HC-pro proteinases resulting in the production of at least ten individual proteins. P3N-PIPO polyprotein is cleaved by P1 and HC-pro proteinases resulting in the production of three individual proteins. The P1 proteinase and the HC-pro cleave only their respective C-termini autocatalytically. 6K1 is essential for proper proteolytic separation of P3 from CI.

It is found in the host cytoplasmic vesicle. The protein resides in the host nucleus. Its subcellular location is the virion. It carries out the reaction RNA(n) + a ribonucleoside 5'-triphosphate = RNA(n+1) + diphosphate. The catalysed reaction is Hydrolyzes glutaminyl bonds, and activity is further restricted by preferences for the amino acids in P6 - P1' that vary with the species of potyvirus, e.g. Glu-Xaa-Xaa-Tyr-Xaa-Gln-|-(Ser or Gly) for the enzyme from tobacco etch virus. The natural substrate is the viral polyprotein, but other proteins and oligopeptides containing the appropriate consensus sequence are also cleaved.. It catalyses the reaction Hydrolyzes a Gly-|-Gly bond at its own C-terminus, commonly in the sequence -Tyr-Xaa-Val-Gly-|-Gly, in the processing of the potyviral polyprotein.. Required for aphid transmission and also has proteolytic activity. Only cleaves a Gly-Gly dipeptide at its own C-terminus. Interacts with virions and aphid stylets. Acts as a suppressor of RNA-mediated gene silencing, also known as post-transcriptional gene silencing (PTGS), a mechanism of plant viral defense that limits the accumulation of viral RNAs. May have RNA-binding activity. Its function is as follows. Has helicase activity. It may be involved in replication. In terms of biological role, indispensable for virus replication. Functionally, mediates the cap-independent, EIF4E-dependent translation of viral genomic RNAs. Binds to the cap-binding site of host EIF4E and thus interferes with the host EIF4E-dependent mRNA export and translation. VPg-RNA directly binds EIF4E and is a template for transcription. Also forms trimeric complexes with EIF4E-EIF4G, which are templates for translation. Has RNA-binding and proteolytic activities. Its function is as follows. An RNA-dependent RNA polymerase that plays an essential role in the virus replication. In terms of biological role, involved in aphid transmission, cell-to-cell and systemis movement, encapsidation of the viral RNA and in the regulation of viral RNA amplification. In Lettuce mosaic virus (strain E) (LMV), this protein is Genome polyprotein.